The following is a 357-amino-acid chain: Peptide chain release factor 1 (357 aa).

Gln-232 is modified (N5-methylglutamine).

The protein belongs to the prokaryotic/mitochondrial release factor family. Methylated by PrmC. Methylation increases the termination efficiency of RF1.

The protein resides in the cytoplasm. In terms of biological role, peptide chain release factor 1 directs the termination of translation in response to the peptide chain termination codons UAG and UAA. This is Peptide chain release factor 1 from Nitratidesulfovibrio vulgaris (strain ATCC 29579 / DSM 644 / CCUG 34227 / NCIMB 8303 / VKM B-1760 / Hildenborough) (Desulfovibrio vulgaris).